The following is a 217-amino-acid chain: MATGSHTATLLLAVALLGLPWPQEAGAFPAMPLSSLFANAVLRAQHLHQLAADTYKEFERAYIPEGQRYSIQNAQAAFCFSETIPAPTGKDEAQQRSDMELLRFSLLLIQSWLGPVQLLSRVFTNSLVLGTSDRVYEKLKDLEEGIQALMRELEDGSPRVGQILKQTYDKFDTNLRSDDALLKNYGLLSCFKKDLHKAETYLRVMKCRRFVESSCAF.

Residues 1 to 27 (MATGSHTATLLLAVALLGLPWPQEAGA) form the signal peptide. A Zn(2+)-binding site is contributed by His46. Cys79 and Cys190 form a disulfide bridge. Ser132 is modified (phosphoserine). Position 199 (Glu199) interacts with Zn(2+). A disulfide bridge links Cys207 with Cys215.

This sequence belongs to the somatotropin/prolactin family.

It localises to the secreted. Its function is as follows. Plays an important role in growth control. Its major role in stimulating body growth is to stimulate the liver and other tissues to secrete IGF1. It stimulates both the differentiation and proliferation of myoblasts. It also stimulates amino acid uptake and protein synthesis in muscle and other tissues. The protein is Somatotropin (GH1) of Xanthonycticebus pygmaeus (Pygmy slow loris).